Here is a 546-residue protein sequence, read N- to C-terminus: Cytochrome P450 monooxygenase 219 (546 aa).

The first 22 residues, 1-22 (MATLIVLLYGLLAFGTVWLVRR), serve as a signal peptide directing secretion. N-linked (GlcNAc...) asparagine glycans are attached at residues Asn367 and Asn441. Cys487 contacts heme.

The protein belongs to the cytochrome P450 family. Heme is required as a cofactor.

Its pathway is secondary metabolite biosynthesis. In terms of biological role, cytochrome P450 monooxygenase that is able to use testosterone, anthracene, carbazole, pyrene, phenanthrene and trans-stilbene as substrates for oxidation. These multifunctional properties against a series of polycyclic aromatic hydrocarbons (PAHs) suggest that CYP219 would play important roles, at least in part, in fungal metabolic systems involved in xenobiotic detoxification. The protein is Cytochrome P450 monooxygenase 219 of Postia placenta (strain ATCC 44394 / Madison 698-R) (Brown rot fungus).